A 215-amino-acid chain; its full sequence is Lysozyme-like protein 5 (215 aa).

The signal sequence occupies residues 1 to 17 (MKHFFITILLFCSVVSA). Residues 18 to 215 (ARNGIDINSP…GVSVDMNYIP (198 aa)) enclose the Ch-type lysozyme domain. Catalysis depends on residues Asp-23, Asp-113, and Glu-115.

This sequence belongs to the glycosyl hydrolase 25 family.

Plays a role in resistance to Gram-positive bacteria S.aureus or B.thuringiensis infection. The polypeptide is Lysozyme-like protein 5 (Caenorhabditis elegans).